The chain runs to 266 residues: 3-methyl-2-oxobutanoate hydroxymethyltransferase 2 (266 aa).

Residues Asp45 and Asp84 each contribute to the Mg(2+) site. Residues Asp45–Ser46, Asp84, and Lys112 each bind 3-methyl-2-oxobutanoate. Glu114 is a Mg(2+) binding site. Glu181 acts as the Proton acceptor in catalysis.

This sequence belongs to the PanB family. Homodecamer; pentamer of dimers. Mg(2+) is required as a cofactor.

It localises to the cytoplasm. The enzyme catalyses 3-methyl-2-oxobutanoate + (6R)-5,10-methylene-5,6,7,8-tetrahydrofolate + H2O = 2-dehydropantoate + (6S)-5,6,7,8-tetrahydrofolate. It participates in cofactor biosynthesis; (R)-pantothenate biosynthesis; (R)-pantoate from 3-methyl-2-oxobutanoate: step 1/2. In terms of biological role, catalyzes the reversible reaction in which hydroxymethyl group from 5,10-methylenetetrahydrofolate is transferred onto alpha-ketoisovalerate to form ketopantoate. This is 3-methyl-2-oxobutanoate hydroxymethyltransferase 2 from Pseudomonas entomophila (strain L48).